Consider the following 650-residue polypeptide: Chaperone protein DnaK (650 aa).

T200 is modified (phosphothreonine; by autocatalysis). Residues 614–634 are disordered; the sequence is AGAAGAAGAAEGAAHAGGAQQ.

The protein belongs to the heat shock protein 70 family.

Its function is as follows. Acts as a chaperone. The chain is Chaperone protein DnaK from Burkholderia cenocepacia (strain ATCC BAA-245 / DSM 16553 / LMG 16656 / NCTC 13227 / J2315 / CF5610) (Burkholderia cepacia (strain J2315)).